The primary structure comprises 139 residues: MGETVRFGISIDDKLLESFDRLIEQKGYMNRSEAVRDLIRAALVELKWEGGEEETVGTVTLVYNHHVRDLSDKLTEQQHSHHNEIVSALHVHLDAHNCLEVLVVRGKAREVKKIADELIGVKGVKHGKLVMTTTGEELH.

4 residues coordinate Ni(2+): His79, His90, His92, and Cys98.

This sequence belongs to the transcriptional regulatory CopG/NikR family. Ni(2+) serves as cofactor.

Functionally, transcriptional regulator. This chain is Putative nickel-responsive regulator, found in Geobacter metallireducens (strain ATCC 53774 / DSM 7210 / GS-15).